The chain runs to 229 residues: Demethylmenaquinone methyltransferase (229 aa).

S-adenosyl-L-methionine-binding positions include Thr-58, Asp-78, and 100 to 101; that span reads DA.

It belongs to the class I-like SAM-binding methyltransferase superfamily. MenG/UbiE family.

It carries out the reaction a 2-demethylmenaquinol + S-adenosyl-L-methionine = a menaquinol + S-adenosyl-L-homocysteine + H(+). The protein operates within quinol/quinone metabolism; menaquinone biosynthesis; menaquinol from 1,4-dihydroxy-2-naphthoate: step 2/2. Functionally, methyltransferase required for the conversion of demethylmenaquinol (DMKH2) to menaquinol (MKH2). This is Demethylmenaquinone methyltransferase from Thermotoga maritima (strain ATCC 43589 / DSM 3109 / JCM 10099 / NBRC 100826 / MSB8).